A 344-amino-acid chain; its full sequence is MDTLLHKDTIVAEWCDEIITRQSRENHNSLVGFRDRNRVVKHHIQQILDHLKGQNISKLAHVQDPKIAEALRTLIAWLKSNERFRPSTEPPLTDRQLEEAFSQLYLGDWAYVDRKYDDPVIPGQNFALFSFLPTVGAQPDADGVYGFLKIRGTFDRAEQAEDKARELIQYFTANTIKACKVGTPVPVAISQPSTEAIEIPPPKNGPFETDGPTDLKYQQLIQAQSMDEQKQIQEIYQNVEKLKEDVTKNPANKEPMQVYLELLQKMATCAWTYSQAQKTKDDMKSIILSDRLKLEEMDQKYPHLQNEYRKVYDEKNQQLGLDQCSDDMALGIRKYFGSRADLDF.

Positions 221–249 (IQAQSMDEQKQIQEIYQNVEKLKEDVTKN) form a coiled coil.

This sequence belongs to the IIV-6 287R family.

This is an uncharacterized protein from Aedes vexans (Inland floodwater mosquito).